The primary structure comprises 255 residues: High-affinity branched-chain amino acid transport ATP-binding protein LivG (255 aa).

The region spanning Leu6 to Glu254 is the ABC transporter domain. Gly38–Thr45 is a binding site for ATP.

The protein belongs to the ABC transporter superfamily.

Functionally, component of the leucine-specific transport system. The chain is High-affinity branched-chain amino acid transport ATP-binding protein LivG (livG) from Escherichia coli O157:H7.